The primary structure comprises 370 residues: Anhydro-N-acetylmuramic acid kinase (370 aa).

12–19 (GTSLDGID) serves as a coordination point for ATP.

This sequence belongs to the anhydro-N-acetylmuramic acid kinase family.

It carries out the reaction 1,6-anhydro-N-acetyl-beta-muramate + ATP + H2O = N-acetyl-D-muramate 6-phosphate + ADP + H(+). It participates in amino-sugar metabolism; 1,6-anhydro-N-acetylmuramate degradation. It functions in the pathway cell wall biogenesis; peptidoglycan recycling. In terms of biological role, catalyzes the specific phosphorylation of 1,6-anhydro-N-acetylmuramic acid (anhMurNAc) with the simultaneous cleavage of the 1,6-anhydro ring, generating MurNAc-6-P. Is required for the utilization of anhMurNAc either imported from the medium or derived from its own cell wall murein, and thus plays a role in cell wall recycling. This chain is Anhydro-N-acetylmuramic acid kinase, found in Yersinia enterocolitica serotype O:8 / biotype 1B (strain NCTC 13174 / 8081).